Here is a 597-residue protein sequence, read N- to C-terminus: Aspartate--tRNA(Asp/Asn) ligase (597 aa).

Glu-176 is a binding site for L-aspartate. The tract at residues 200-203 (QQFK) is aspartate. 2 residues coordinate L-aspartate: Arg-222 and His-451. 222-224 (RDE) serves as a coordination point for ATP. Glu-489 contributes to the ATP binding site. Residue Arg-496 coordinates L-aspartate. 541–544 (GIDR) provides a ligand contact to ATP.

It belongs to the class-II aminoacyl-tRNA synthetase family. Type 1 subfamily. Homodimer.

The protein resides in the cytoplasm. The enzyme catalyses tRNA(Asx) + L-aspartate + ATP = L-aspartyl-tRNA(Asx) + AMP + diphosphate. Functionally, aspartyl-tRNA synthetase with relaxed tRNA specificity since it is able to aspartylate not only its cognate tRNA(Asp) but also tRNA(Asn). Reaction proceeds in two steps: L-aspartate is first activated by ATP to form Asp-AMP and then transferred to the acceptor end of tRNA(Asp/Asn). In Orientia tsutsugamushi (strain Boryong) (Rickettsia tsutsugamushi), this protein is Aspartate--tRNA(Asp/Asn) ligase.